The chain runs to 542 residues: Chaperonin GroEL (542 aa).

Residues 29–32 (TMGP), Lys50, 86–90 (DGTTT), Gly414, 477–479 (NAA), and Asp493 each bind ATP.

The protein belongs to the chaperonin (HSP60) family. As to quaternary structure, forms a cylinder of 14 subunits composed of two heptameric rings stacked back-to-back. Interacts with the co-chaperonin GroES.

It is found in the cytoplasm. The catalysed reaction is ATP + H2O + a folded polypeptide = ADP + phosphate + an unfolded polypeptide.. Together with its co-chaperonin GroES, plays an essential role in assisting protein folding. The GroEL-GroES system forms a nano-cage that allows encapsulation of the non-native substrate proteins and provides a physical environment optimized to promote and accelerate protein folding. This Sulfurimonas denitrificans (strain ATCC 33889 / DSM 1251) (Thiomicrospira denitrificans (strain ATCC 33889 / DSM 1251)) protein is Chaperonin GroEL.